Consider the following 172-residue polypeptide: Outer-membrane lipoprotein carrier protein (172 aa).

The signal sequence occupies residues 1–16; the sequence is MRIALLWVAFGALALA.

It belongs to the LolA family. In terms of assembly, monomer.

The protein localises to the periplasm. In terms of biological role, participates in the translocation of lipoproteins from the inner membrane to the outer membrane. Only forms a complex with a lipoprotein if the residue after the N-terminal Cys is not an aspartate (The Asp acts as a targeting signal to indicate that the lipoprotein should stay in the inner membrane). The protein is Outer-membrane lipoprotein carrier protein of Wolinella succinogenes (strain ATCC 29543 / DSM 1740 / CCUG 13145 / JCM 31913 / LMG 7466 / NCTC 11488 / FDC 602W) (Vibrio succinogenes).